The chain runs to 604 residues: Elongation factor 4 1 (604 aa).

One can recognise a tr-type G domain in the interval 10 to 191; the sequence is EHIRNFCIIA…AIVDSVPAPT (182 aa). Residues 22-27 and 138-141 contribute to the GTP site; these read DHGKST and NKID.

This sequence belongs to the TRAFAC class translation factor GTPase superfamily. Classic translation factor GTPase family. LepA subfamily.

The protein resides in the cell inner membrane. It carries out the reaction GTP + H2O = GDP + phosphate + H(+). In terms of biological role, required for accurate and efficient protein synthesis under certain stress conditions. May act as a fidelity factor of the translation reaction, by catalyzing a one-codon backward translocation of tRNAs on improperly translocated ribosomes. Back-translocation proceeds from a post-translocation (POST) complex to a pre-translocation (PRE) complex, thus giving elongation factor G a second chance to translocate the tRNAs correctly. Binds to ribosomes in a GTP-dependent manner. The sequence is that of Elongation factor 4 1 from Rhodopirellula baltica (strain DSM 10527 / NCIMB 13988 / SH1).